Here is a 154-residue protein sequence, read N- to C-terminus: Ribosomal RNA large subunit methyltransferase H (154 aa).

Residues Leu-70, Gly-102, and 121–126 (LSRLTF) each bind S-adenosyl-L-methionine.

This sequence belongs to the RNA methyltransferase RlmH family. In terms of assembly, homodimer.

The protein resides in the cytoplasm. It catalyses the reaction pseudouridine(1915) in 23S rRNA + S-adenosyl-L-methionine = N(3)-methylpseudouridine(1915) in 23S rRNA + S-adenosyl-L-homocysteine + H(+). In terms of biological role, specifically methylates the pseudouridine at position 1915 (m3Psi1915) in 23S rRNA. This is Ribosomal RNA large subunit methyltransferase H from Geobacter metallireducens (strain ATCC 53774 / DSM 7210 / GS-15).